The primary structure comprises 302 residues: Nucleotide-binding protein Strop_3101 (302 aa).

26–33 serves as a coordination point for ATP; it reads GVSGGGRS. A GTP-binding site is contributed by 77–80; the sequence is DVRS.

The protein belongs to the RapZ-like family.

Displays ATPase and GTPase activities. This chain is Nucleotide-binding protein Strop_3101, found in Salinispora tropica (strain ATCC BAA-916 / DSM 44818 / JCM 13857 / NBRC 105044 / CNB-440).